The chain runs to 338 residues: Fructose-1,6-bisphosphatase class 1 (338 aa).

Mg(2+) contacts are provided by Glu92, Asp115, Leu117, and Asp118. Residues 118–121 (DGSS), Asn211, Tyr244, 262–264 (YLY), and Lys274 contribute to the substrate site. Glu280 provides a ligand contact to Mg(2+).

This sequence belongs to the FBPase class 1 family. Homotetramer. Mg(2+) serves as cofactor.

The protein localises to the cytoplasm. The catalysed reaction is beta-D-fructose 1,6-bisphosphate + H2O = beta-D-fructose 6-phosphate + phosphate. Its pathway is carbohydrate biosynthesis; gluconeogenesis. The sequence is that of Fructose-1,6-bisphosphatase class 1 from Vibrio vulnificus (strain YJ016).